Reading from the N-terminus, the 524-residue chain is Na(+)/H(+) antiporter NhaB (524 aa).

The next 9 helical transmembrane spans lie at F13–P33, L98–F118, A140–V160, F239–L259, A304–V324, G325–G345, L358–I378, A448–I468, and A479–V499.

It belongs to the NhaB Na(+)/H(+) (TC 2.A.34) antiporter family.

The protein resides in the cell inner membrane. The enzyme catalyses 2 Na(+)(in) + 3 H(+)(out) = 2 Na(+)(out) + 3 H(+)(in). Functionally, na(+)/H(+) antiporter that extrudes sodium in exchange for external protons. This is Na(+)/H(+) antiporter NhaB from Yersinia pseudotuberculosis serotype O:3 (strain YPIII).